Consider the following 516-residue polypeptide: DNA-(apurinic or apyrimidinic site) endonuclease 2 (516 aa).

The Mg(2+) site is built by Asn-8 and Glu-47. The active site involves Tyr-155. Positions 196, 198, 302, and 303 each coordinate Mg(2+). The active-site Proton donor/acceptor is the Asp-196. His-303 functions as the Proton acceptor in the catalytic mechanism. Polar residues predominate over residues 357–366; that stretch reads QPSHQIQAQR. A disordered region spans residues 357-389; that stretch reads QPSHQIQAQRQPRKACMHSTRLRKSQGGPKRKQ. Residues 367–389 are compositionally biased toward basic residues; it reads QPRKACMHSTRLRKSQGGPKRKQ. A Glycyl lysine isopeptide (Lys-Gly) (interchain with G-Cter in ubiquitin) cross-link involves residue Lys-370. A required for the interaction and colocalization with PCNA in nuclear foci in presence of oxidative-induced DNA damaging agents region spans residues 389–396; the sequence is QKNLMSYF. Positions 467, 470, 493, and 507 each coordinate Zn(2+). A GRF-type zinc finger spans residues 467–516; it reads CGGHREPCVMRTVKKTGPNFGRQFYMCARPRGPPSDPSSRCNFFLWSRPS.

This sequence belongs to the DNA repair enzymes AP/ExoA family. In terms of assembly, interacts with PCNA. This interaction is increased by misincorporation of uracil in nuclear DNA. Mg(2+) serves as cofactor. It depends on Mn(2+) as a cofactor. Ubiquitinated by the CUL9-RBX1 complex. Ubiquitinated by MKRN3 at Lys-370 leading to proteasomal degradation. In terms of tissue distribution, expressed in lymphocytes, thymocytes and splenocytes (at protein level). Highly expressed in the thymus and weakly expressed in the bone marrow, spleen, eye, kidney, lung, brain and uterus.

The protein localises to the nucleus. It is found in the cytoplasm. Its subcellular location is the mitochondrion. The enzyme catalyses Exonucleolytic cleavage in the 3'- to 5'-direction to yield nucleoside 5'-phosphates.. 3'-5' exonuclease activity is activated by sodium and manganese. 3'-5' exonuclease and 3'-phosphodiesterase activities are stimulated in presence of PCNA. Functions as a weak apurinic/apyrimidinic (AP) endodeoxyribonuclease in the DNA base excision repair (BER) pathway of DNA lesions induced by oxidative and alkylating agents. Initiates repair of AP sites in DNA by catalyzing hydrolytic incision of the phosphodiester backbone immediately adjacent to the damage, generating a single-strand break with 5'-deoxyribose phosphate and 3'-hydroxyl ends. Also displays double-stranded DNA 3'-5' exonuclease, 3'-phosphodiesterase activities. Shows robust 3'-5' exonuclease activity on 3'-recessed heteroduplex DNA and is able to remove mismatched nucleotides preferentially. Shows fairly strong 3'-phosphodiesterase activity involved in the removal of 3'-damaged termini formed in DNA by oxidative agents. In the nucleus functions in the PCNA-dependent BER pathway. Plays a role in reversing blocked 3' DNA ends, problematic lesions that preclude DNA synthesis. Required for somatic hypermutation (SHM) and DNA cleavage step of class switch recombination (CSR) of immunoglobulin genes. Required for proper cell cycle progression during proliferation of peripheral lymphocytes. This is DNA-(apurinic or apyrimidinic site) endonuclease 2 (Apex2) from Mus musculus (Mouse).